The following is a 352-amino-acid chain: UPF0252 protein MJ1282 (352 aa).

This sequence belongs to the UPF0252 family.

This chain is UPF0252 protein MJ1282, found in Methanocaldococcus jannaschii (strain ATCC 43067 / DSM 2661 / JAL-1 / JCM 10045 / NBRC 100440) (Methanococcus jannaschii).